The sequence spans 1072 residues: MLGDGNGGMCTIPGFNQIQFEGFCRFIDQGLTEELSKFPKIEDDTDQEIEFQLFVETYHLVEPLIKERDAVYELLTYSSELYISAGLIWKSSRDMQKQTIFIGNIPLMNSLGTSIVNGIYRIVINQILQSPGIYYRSELDHNGISVYTGTIISDWGGRLELEIDRKARIWARVSRKQKISILVLSSAMGSNLREILENVCYPEMFLSFLNEKEKKTIGSKENAILEFYQQFSCVGGDPVFSESLCKELHTKFFQQRCELGRIGRQNMNRRLNLDIPQHNTFLLPRDILAAADHLIGMKFGMGTLDDTNHLKNKRIRSVADLLQDQFGLALVRLESVVRRTICGAIRHKLIPTPHNLVTSTPLTTTYESFFGLHPLSQVLDRTNPLTQIVHGRKLSYLGPGGLTARTASFRMRDIHPSYYGRICPIDTSEGINVGLIGSLAIHARIGRGGSLESPFYEISERSNKGRMLYFSPSRDEYYMVAAGNSLALNRGIQEEQVVPARYRQEFLTLAWDQVHLRSIFPFQYFSIGASLIPFIEHNDANRALMSSNMQRQAVPLSQSERCIVGTGLERQASLDSGVTAIAEREGKIIYTNSDKIILSGSGDTLSIPLVMYQRSNKNTWMHQKPQVPRGKCIKKGQILADGAATVGGELALGKNVLVAYMPWEGYNFEDAVLISERLVYEDIYTSFHIRKYEMQTHVTSQGPERITNEIPHLEAHLLRNLDKNGIVMMGSWVEAGEILVGKLTPQMAEEESSYAPEERLLRAILGIQISTSKETCLKLPIGGRGRVIDVRWIQKRGGSSYNPETIRVYILQKREIKVGDKVAGRHGNKGIISKILPRQDMPYLQDGRPVDMVFNPLGVPSRMNVGQIFECSLGFAGDLLERHYRIAPFDERYEQEASRKLVFSELYEASKQTANPWVFEPEYPGKSRLFDGRTGDPFEQPVIIGKPYILKLIHQVDDKIHGRSSGHYARVTQQPLRGRAKQGGQRVGEMEVWALEGFGVAHLLQEMLTYKSDHIRARQGVLGTTILGGTIPKPEDAPESFRLLVRELRSLALELNHFLVSEKNFQINRKEA.

This sequence belongs to the RNA polymerase beta chain family. In plastids the minimal PEP RNA polymerase catalytic core is composed of four subunits: alpha, beta, beta', and beta''. When a (nuclear-encoded) sigma factor is associated with the core the holoenzyme is formed, which can initiate transcription.

It is found in the plastid. It localises to the chloroplast. It catalyses the reaction RNA(n) + a ribonucleoside 5'-triphosphate = RNA(n+1) + diphosphate. Functionally, DNA-dependent RNA polymerase catalyzes the transcription of DNA into RNA using the four ribonucleoside triphosphates as substrates. This Oenothera elata subsp. hookeri (Hooker's evening primrose) protein is DNA-directed RNA polymerase subunit beta.